Reading from the N-terminus, the 845-residue chain is Molybdenum cofactor sulfurase (845 aa).

At K240 the chain carries N6-(pyridoxal phosphate)lysine. Residue C404 is part of the active site. In terms of domain architecture, MOSC spans 666 to 840 (SFPQDSSPSS…LMVGDTVTPS (175 aa)).

This sequence belongs to the class-V pyridoxal-phosphate-dependent aminotransferase family. MOCOS subfamily. The cofactor is pyridoxal 5'-phosphate.

It catalyses the reaction Mo-molybdopterin + L-cysteine + AH2 = thio-Mo-molybdopterin + L-alanine + A + H2O. It functions in the pathway cofactor biosynthesis; molybdopterin biosynthesis. Its function is as follows. Sulfurates the molybdenum cofactor. Sulfation of molybdenum is essential for xanthine dehydrogenase (XDH) and aldehyde oxidase (ADO) enzymes in which molybdenum cofactor is liganded by 1 oxygen and 1 sulfur atom in active form. This chain is Molybdenum cofactor sulfurase, found in Aspergillus clavatus (strain ATCC 1007 / CBS 513.65 / DSM 816 / NCTC 3887 / NRRL 1 / QM 1276 / 107).